Consider the following 50-residue polypeptide: PhoP/PhoQ regulator MgrB (50 aa).

At M1–L4 the chain is on the cytoplasmic side. A helical membrane pass occupies residues N5–L27. The Periplasmic portion of the chain corresponds to D28 to W50.

The protein belongs to the MgrB family. Probably interacts with the periplasmic domain of PhoQ.

Its subcellular location is the cell inner membrane. In terms of biological role, phoP-regulated transcription is redox-sensitive, being activated when the periplasm becomes more reducing. MgrB acts between DsbA/DsbB and PhoP/PhoQ in this pathway. Represses PhoP/PhoQ signaling, possibly by binding to the periplasmic domain of PhoQ, altering its activity and that of downstream effector PhoP. The sequence is that of PhoP/PhoQ regulator MgrB from Yersinia pestis.